The chain runs to 156 residues: Ribosomal RNA large subunit methyltransferase H (156 aa).

Residues leucine 73, glycine 104, and leucine 123 to methionine 128 each bind S-adenosyl-L-methionine.

It belongs to the RNA methyltransferase RlmH family. As to quaternary structure, homodimer.

Its subcellular location is the cytoplasm. It catalyses the reaction pseudouridine(1915) in 23S rRNA + S-adenosyl-L-methionine = N(3)-methylpseudouridine(1915) in 23S rRNA + S-adenosyl-L-homocysteine + H(+). Its function is as follows. Specifically methylates the pseudouridine at position 1915 (m3Psi1915) in 23S rRNA. The chain is Ribosomal RNA large subunit methyltransferase H from Proteus mirabilis (strain HI4320).